Consider the following 688-residue polypeptide: MSKELKLFRNFGIMAHIDAGKTTTSERILYHTGKNHKIGETHDGAATMDWMAQEKERGITITSAATYAKWKGHSLNLIDTPGHVDFTVEVERSLRVLDGAVAVLDGQNGVEPQTETVWRQATKYNVPRIVFVNKMDKTGADFYYSIETMKNRLGVKATAIQIPIGAEADFVGSIDLIEMKAYIYDGKADEEYKIEDIPADYLTKAQVMRSQMIDDVAVFDDEVMEKYLSGEELSHEDIKKCIRKGVISTELYPVLCGTAFKNKGVKKLLDAVVDFLPSPIDVPPIKGVDDHGNPIEYHNDPNEPFAALAFKVATDPFVGRLTYIRVYSGKLDKGTYIYNATKDKKERISRLVKMHSNNRDEIDSISAGDICAVIGLKDTTTGDTICDEKKPVILEQMVFAEPVISLSVEPKTKADQEKMSLALSKLAEEDPTFRTYTNEETGQTIIAGMGELHLDVLVDRMRREFNVQVNVGAPQVSYRETFTEVADAEGKYIKQSGGRGQYGHVWIKFEPNHDKGFEFVDNIVGGKVPKEYIKEVENGLIEALTSGPIAGYQTIDVKATIFDGSYHDVDSSGMAYKIAASLAFKEAAKVCKPVLLEPIMSVDVTTPDDYFGTVMGDISKRRGVIEGQEQRGNAQAIKAKVPLSEMFGYATDLRSNTQGRGQYIMQFSHYAQAPKSVTEEVMVARAKK.

Positions 6–280 (KLFRNFGIMA…AVVDFLPSPI (275 aa)) constitute a tr-type G domain. GTP contacts are provided by residues 15–22 (AHIDAGKT), 79–83 (DTPGH), and 133–136 (NKMD).

It belongs to the TRAFAC class translation factor GTPase superfamily. Classic translation factor GTPase family. EF-G/EF-2 subfamily.

It is found in the cytoplasm. Functionally, catalyzes the GTP-dependent ribosomal translocation step during translation elongation. During this step, the ribosome changes from the pre-translocational (PRE) to the post-translocational (POST) state as the newly formed A-site-bound peptidyl-tRNA and P-site-bound deacylated tRNA move to the P and E sites, respectively. Catalyzes the coordinated movement of the two tRNA molecules, the mRNA and conformational changes in the ribosome. The polypeptide is Elongation factor G (Ureaplasma parvum serovar 3 (strain ATCC 27815 / 27 / NCTC 11736)).